We begin with the raw amino-acid sequence, 353 residues long: Quinolinate synthase (353 aa).

The iminosuccinate site is built by H49 and S70. C115 provides a ligand contact to [4Fe-4S] cluster. Iminosuccinate is bound by residues 141-143 (YAN) and S158. Residue C202 coordinates [4Fe-4S] cluster. Iminosuccinate contacts are provided by residues 228 to 230 (HPE) and T245. A [4Fe-4S] cluster-binding site is contributed by C299.

This sequence belongs to the quinolinate synthase family. Type 1 subfamily. The cofactor is [4Fe-4S] cluster.

It localises to the cytoplasm. It catalyses the reaction iminosuccinate + dihydroxyacetone phosphate = quinolinate + phosphate + 2 H2O + H(+). It participates in cofactor biosynthesis; NAD(+) biosynthesis; quinolinate from iminoaspartate: step 1/1. Its function is as follows. Catalyzes the condensation of iminoaspartate with dihydroxyacetone phosphate to form quinolinate. The protein is Quinolinate synthase of Marinobacter nauticus (strain ATCC 700491 / DSM 11845 / VT8) (Marinobacter aquaeolei).